Consider the following 245-residue polypeptide: Biosynthetic peptidoglycan transglycosylase (245 aa).

A helical transmembrane segment spans residues 29–49; that stretch reads IVLAVLIVLILPYALIVFYLL.

It belongs to the glycosyltransferase 51 family.

It localises to the cell inner membrane. It carries out the reaction [GlcNAc-(1-&gt;4)-Mur2Ac(oyl-L-Ala-gamma-D-Glu-L-Lys-D-Ala-D-Ala)](n)-di-trans,octa-cis-undecaprenyl diphosphate + beta-D-GlcNAc-(1-&gt;4)-Mur2Ac(oyl-L-Ala-gamma-D-Glu-L-Lys-D-Ala-D-Ala)-di-trans,octa-cis-undecaprenyl diphosphate = [GlcNAc-(1-&gt;4)-Mur2Ac(oyl-L-Ala-gamma-D-Glu-L-Lys-D-Ala-D-Ala)](n+1)-di-trans,octa-cis-undecaprenyl diphosphate + di-trans,octa-cis-undecaprenyl diphosphate + H(+). It participates in cell wall biogenesis; peptidoglycan biosynthesis. Peptidoglycan polymerase that catalyzes glycan chain elongation from lipid-linked precursors. The protein is Biosynthetic peptidoglycan transglycosylase of Rhizobium johnstonii (strain DSM 114642 / LMG 32736 / 3841) (Rhizobium leguminosarum bv. viciae).